The following is a 234-amino-acid chain: Large ribosomal subunit protein uL1 (234 aa).

It belongs to the universal ribosomal protein uL1 family. In terms of assembly, part of the 50S ribosomal subunit.

Functionally, binds directly to 23S rRNA. The L1 stalk is quite mobile in the ribosome, and is involved in E site tRNA release. In terms of biological role, protein L1 is also a translational repressor protein, it controls the translation of the L11 operon by binding to its mRNA. This Aliivibrio salmonicida (strain LFI1238) (Vibrio salmonicida (strain LFI1238)) protein is Large ribosomal subunit protein uL1.